The sequence spans 310 residues: Methionyl-tRNA formyltransferase (310 aa).

109–112 provides a ligand contact to (6S)-5,6,7,8-tetrahydrofolate; sequence SLLP.

This sequence belongs to the Fmt family.

It catalyses the reaction L-methionyl-tRNA(fMet) + (6R)-10-formyltetrahydrofolate = N-formyl-L-methionyl-tRNA(fMet) + (6S)-5,6,7,8-tetrahydrofolate + H(+). Functionally, attaches a formyl group to the free amino group of methionyl-tRNA(fMet). The formyl group appears to play a dual role in the initiator identity of N-formylmethionyl-tRNA by promoting its recognition by IF2 and preventing the misappropriation of this tRNA by the elongation apparatus. The protein is Methionyl-tRNA formyltransferase of Parvibaculum lavamentivorans (strain DS-1 / DSM 13023 / NCIMB 13966).